The chain runs to 632 residues: Sodium- and chloride-dependent GABA transporter 3 (632 aa).

The segment at 1-41 (MTAEKALPLGNGKAAEEARESEAPGGGCSSGGAAPARHPRV) is disordered. The Cytoplasmic segment spans residues 1–58 (MTAEKALPLGNGKAAEEARESEAPGGGCSSGGAAPARHPRVKRDKAVHERGHWNNKVE). Ser-21 is modified (phosphoserine). Helical transmembrane passes span 59-79 (FVLSVAGEIIGLGNVWRFPYL), 87-106 (AFLIPYVVFFICCGIPVFFL), and 131-151 (GIGYATQVIEAHLNVYYIIIL). The Extracellular portion of the chain corresponds to 152-225 (AWAIFYLSNC…DGIEHIGNLR (74 aa)). Asn-187, Asn-190, and Asn-198 each carry an N-linked (GlcNAc...) asparagine glycan. Helical transmembrane passes span 226–244 (WELALCLLAAWTICYFCIW), 253–270 (VVYVTATFPYIMLLILLI), 306–323 (IFFSYAICLGCLTALGSY), 335–356 (IMLCCLNSGTSFVAGFAIFSVL), 389–408 (MPLSPLWATLFFMMLIFLGL), 438–456 (LLILALSVISYFLGLVMLT), 473–493 (GMCLLFVAIFECICIGWVYGS), 514–533 (WCWMIMTPGICAGIFIFFLI), and 553–571 (IGWLMALSSMLCIPLWICI). The Cytoplasmic segment spans residues 572 to 632 (TVWKTEGTLP…AAITEKETHF (61 aa)).

Belongs to the sodium:neurotransmitter symporter (SNF) (TC 2.A.22) family. SLC6A11 subfamily. As to expression, widespread distribution in the brain.

The protein resides in the cell membrane. It catalyses the reaction 4-aminobutanoate(out) + chloride(out) + 2 Na(+)(out) = 4-aminobutanoate(in) + chloride(in) + 2 Na(+)(in). It carries out the reaction taurine(out) + chloride(out) + 2 Na(+)(out) = taurine(in) + chloride(in) + 2 Na(+)(in). The enzyme catalyses beta-alanine(out) + chloride(out) + 2 Na(+)(out) = beta-alanine(in) + chloride(in) + 2 Na(+)(in). The catalysed reaction is hypotaurine(out) + chloride(out) + 2 Na(+)(out) = hypotaurine(in) + chloride(in) + 2 Na(+)(in). GABA transport is inhibited by SNAP-5114. Mediates sodium- and chloride-dependent transport of gamma-aminobutyric acid (GABA). Can also mediate transport of beta-alanine and to a lower extent that of taurine and hypotaurine. The protein is Sodium- and chloride-dependent GABA transporter 3 (SLC6A11) of Homo sapiens (Human).